The primary structure comprises 245 residues: MYPVDLHMHTVASTHAYSTLSDYIAQAKQKGIKLFAITDHGPDMEDAPHHWHFINMRIWPRVVDGVGILRGIEANIKNVDGEIDCSGKMFDSLDLIIAGFHEPVFAPHDKATNTQAMIATIASGNVHIISHPGNPKYEIDVKAVAEAAAKHQVALEINNSSFLHSRKGSEDNCREVAAAVRDAGGWVALGSDSHTAFTMGEFEECLKILDAVDFPPERILNVSPRRLLNFLESRGMAPIAEFADL.

Zn(2+) is bound by residues H7, H9, H15, H40, E73, H101, H131, D192, and H194.

Belongs to the PHP family. In terms of assembly, homotrimer. It depends on Zn(2+) as a cofactor.

The protein is Probable phosphatase YcdX of Escherichia coli (strain K12 / MC4100 / BW2952).